The sequence spans 30 residues: 2S seed storage-like protein (30 aa).

The protein belongs to the 2S seed storage albumins family. In terms of assembly, the mature protein is a heterodimer of a small and a large chain linked by 2 disulfide bonds. In terms of tissue distribution, extracted from castor bean.

This is a 2S seed storage protein. Inhibits spore germination in R.solani and F.oxysporum. Exhibits anti-trypsin activity. This Ricinus communis (Castor bean) protein is 2S seed storage-like protein.